A 302-amino-acid chain; its full sequence is 4-hydroxy-tetrahydrodipicolinate synthase (302 aa).

Thr-50 contacts pyruvate. Tyr-138 serves as the catalytic Proton donor/acceptor. The active-site Schiff-base intermediate with substrate is the Lys-167. Residue Val-209 participates in pyruvate binding.

The protein belongs to the DapA family. Homotetramer; dimer of dimers.

It localises to the cytoplasm. It catalyses the reaction L-aspartate 4-semialdehyde + pyruvate = (2S,4S)-4-hydroxy-2,3,4,5-tetrahydrodipicolinate + H2O + H(+). Its pathway is amino-acid biosynthesis; L-lysine biosynthesis via DAP pathway; (S)-tetrahydrodipicolinate from L-aspartate: step 3/4. Functionally, catalyzes the condensation of (S)-aspartate-beta-semialdehyde [(S)-ASA] and pyruvate to 4-hydroxy-tetrahydrodipicolinate (HTPA). This is 4-hydroxy-tetrahydrodipicolinate synthase from Salinibacter ruber (strain DSM 13855 / M31).